The following is a 65-amino-acid chain: UPF0434 protein CC_0108 (65 aa).

This sequence belongs to the UPF0434 family.

This chain is UPF0434 protein CC_0108, found in Caulobacter vibrioides (strain ATCC 19089 / CIP 103742 / CB 15) (Caulobacter crescentus).